The sequence spans 286 residues: Ribose-phosphate pyrophosphokinase (286 aa).

Residues aspartate 34–glutamate 36 and arginine 91–glutamine 92 contribute to the ATP site. The Mg(2+) site is built by histidine 124 and aspartate 161. Residue lysine 184 is part of the active site. Residues arginine 186, aspartate 210, and serine 214–threonine 218 contribute to the D-ribose 5-phosphate site.

The protein belongs to the ribose-phosphate pyrophosphokinase family. Class III (archaeal) subfamily. The cofactor is Mg(2+).

It is found in the cytoplasm. The enzyme catalyses D-ribose 5-phosphate + ATP = 5-phospho-alpha-D-ribose 1-diphosphate + AMP + H(+). Its pathway is metabolic intermediate biosynthesis; 5-phospho-alpha-D-ribose 1-diphosphate biosynthesis; 5-phospho-alpha-D-ribose 1-diphosphate from D-ribose 5-phosphate (route I): step 1/1. Functionally, involved in the biosynthesis of the central metabolite phospho-alpha-D-ribosyl-1-pyrophosphate (PRPP) via the transfer of pyrophosphoryl group from ATP to 1-hydroxyl of ribose-5-phosphate (Rib-5-P). This chain is Ribose-phosphate pyrophosphokinase, found in Thermoplasma acidophilum (strain ATCC 25905 / DSM 1728 / JCM 9062 / NBRC 15155 / AMRC-C165).